A 155-amino-acid chain; its full sequence is Mediator of RNA polymerase II transcription subunit 21 (155 aa).

A disordered region spans residues 29–73; sequence QAPPSVPPGQHRVDTMPEIKGKAASENPQSNPPQPAEPPVPEKIS. Positions 39 to 51 are enriched in basic and acidic residues; the sequence is HRVDTMPEIKGKA. Residues 58 to 69 show a composition bias toward pro residues; it reads SNPPQPAEPPVP. Residues 75–147 adopt a coiled-coil conformation; sequence EQFNQDLKEF…EVLLKKVEDK (73 aa).

This sequence belongs to the Mediator complex subunit 21 family. As to quaternary structure, component of the Mediator complex.

Its subcellular location is the nucleus. Functionally, component of the Mediator complex, a coactivator involved in the regulated transcription of nearly all RNA polymerase II-dependent genes. Mediator functions as a bridge to convey information from gene-specific regulatory proteins to the basal RNA polymerase II transcription machinery. Mediator is recruited to promoters by direct interactions with regulatory proteins and serves as a scaffold for the assembly of a functional preinitiation complex with RNA polymerase II and the general transcription factors. This chain is Mediator of RNA polymerase II transcription subunit 21 (SRB7), found in Phaeosphaeria nodorum (strain SN15 / ATCC MYA-4574 / FGSC 10173) (Glume blotch fungus).